Reading from the N-terminus, the 280-residue chain is Chlorophyll a-b binding protein CP26, chloroplastic (280 aa).

The N-terminal 48 residues, 1–48 (MASLGVSEMLGTPLNFRAVSRSSAPLASSPSTFKTVALFSKKKPAPAK), are a transit peptide targeting the chloroplast. A chlorophyll b-binding site is contributed by phenylalanine 70. Chlorophyll a is bound by residues tyrosine 95, glutamate 114, and histidine 117. The next 2 helical transmembrane spans lie at 110–130 (YQAF…GFII) and 167–187 (IPIN…GAEY). Positions 119, 167, 186, and 189 each coordinate chlorophyll b. Lysine 224, glutamate 225, asparagine 228, arginine 230, glutamine 242, and histidine 257 together coordinate chlorophyll a. The helical transmembrane segment at 231–251 (LAMFAMLGFFIQAYVTGEGPV) threads the bilayer.

This sequence belongs to the light-harvesting chlorophyll a/b-binding (LHC) protein family. As to quaternary structure, forms heterotrimers with LHCB3. The LHC complex consists of chlorophyll a-b binding proteins. Requires Binds at least 14 chlorophylls (8 Chl-a and 6 Chl-b) and carotenoids such as lutein and neoxanthin. as cofactor. Post-translationally, photoregulated by reversible phosphorylation of its threonine residues.

It localises to the plastid. It is found in the chloroplast thylakoid membrane. Functionally, the light-harvesting complex (LHC) functions as a light receptor, it captures and delivers excitation energy to photosystems with which it is closely associated. The polypeptide is Chlorophyll a-b binding protein CP26, chloroplastic (LHCB5) (Arabidopsis thaliana (Mouse-ear cress)).